We begin with the raw amino-acid sequence, 191 residues long: Calcium-activated potassium channel subunit beta-1 (191 aa).

The Cytoplasmic segment spans residues 1 to 15 (MGKKLVMAQKRGETR). The helical transmembrane segment at 16–36 (ALCLGVAMVMCAVIAYYILGT) threads the bilayer. Topologically, residues 37–157 (TMLPLYQKSV…YRRLYGPQTL (121 aa)) are extracellular. N-linked (GlcNAc...) asparagine glycans are attached at residues asparagine 80 and asparagine 142. A helical transmembrane segment spans residues 158–178 (LFSLFWPTFLLTGGLLIIAMV). The Cytoplasmic portion of the chain corresponds to 179-191 (KINQSLSILAAQR).

This sequence belongs to the KCNMB (TC 8.A.14.1) family. KCNMB1 subfamily. As to quaternary structure, interacts with KCNMA1 tetramer. There are probably 4 molecules of KCMNB1 per KCNMA1 tetramer. N-glycosylated.

It is found in the membrane. Its function is as follows. Regulatory subunit of the calcium activated potassium KCNMA1 (maxiK) channel. Modulates the calcium sensitivity and gating kinetics of KCNMA1, thereby contributing to KCNMA1 channel diversity. Increases the apparent Ca(2+)/voltage sensitivity of the KCNMA1 channel. It also modifies KCNMA1 channel kinetics and alters its pharmacological properties. It slows down the activation and the deactivation kinetics of the channel. Acts as a negative regulator of smooth muscle contraction by enhancing the calcium sensitivity to KCNMA1. Its presence is also a requirement for internal binding of the KCNMA1 channel opener dehydrosoyasaponin I (DHS-1) triterpene glycoside and for external binding of the agonist hormone 17-beta-estradiol (E2). Increases the binding activity of charybdotoxin (CTX) toxin to KCNMA1 peptide blocker by increasing the CTX association rate and decreasing the dissociation rate. The sequence is that of Calcium-activated potassium channel subunit beta-1 (KCNMB1) from Canis lupus familiaris (Dog).